The following is a 419-amino-acid chain: Serine hydroxymethyltransferase (419 aa).

Residues Leu122 and 126–128 each bind (6S)-5,6,7,8-tetrahydrofolate; that span reads GHL. Lys231 is modified (N6-(pyridoxal phosphate)lysine). 354 to 356 provides a ligand contact to (6S)-5,6,7,8-tetrahydrofolate; that stretch reads SPF.

It belongs to the SHMT family. Homodimer. It depends on pyridoxal 5'-phosphate as a cofactor.

It is found in the cytoplasm. It catalyses the reaction (6R)-5,10-methylene-5,6,7,8-tetrahydrofolate + glycine + H2O = (6S)-5,6,7,8-tetrahydrofolate + L-serine. It participates in one-carbon metabolism; tetrahydrofolate interconversion. It functions in the pathway amino-acid biosynthesis; glycine biosynthesis; glycine from L-serine: step 1/1. Functionally, catalyzes the reversible interconversion of serine and glycine with tetrahydrofolate (THF) serving as the one-carbon carrier. This reaction serves as the major source of one-carbon groups required for the biosynthesis of purines, thymidylate, methionine, and other important biomolecules. Also exhibits THF-independent aldolase activity toward beta-hydroxyamino acids, producing glycine and aldehydes, via a retro-aldol mechanism. This chain is Serine hydroxymethyltransferase, found in Exiguobacterium sibiricum (strain DSM 17290 / CCUG 55495 / CIP 109462 / JCM 13490 / 255-15).